Reading from the N-terminus, the 144-residue chain is Ribosome-binding factor A (144 aa).

Disordered regions lie at residues 1–22 (MPRHHQKKSSASGGGSQRQLRV) and 125–144 (TPAVQKDLEQDPDSDREEEQ). Residues 134–144 (QDPDSDREEEQ) show a composition bias toward acidic residues.

This sequence belongs to the RbfA family. As to quaternary structure, monomer. Binds 30S ribosomal subunits, but not 50S ribosomal subunits or 70S ribosomes.

It localises to the cytoplasm. One of several proteins that assist in the late maturation steps of the functional core of the 30S ribosomal subunit. Associates with free 30S ribosomal subunits (but not with 30S subunits that are part of 70S ribosomes or polysomes). Required for efficient processing of 16S rRNA. May interact with the 5'-terminal helix region of 16S rRNA. The chain is Ribosome-binding factor A from Bradyrhizobium diazoefficiens (strain JCM 10833 / BCRC 13528 / IAM 13628 / NBRC 14792 / USDA 110).